A 376-amino-acid polypeptide reads, in one-letter code: Queuine tRNA-ribosyltransferase (376 aa).

The Proton acceptor role is filled by Asp-93. Substrate contacts are provided by residues 93–97 (DSGGF), Asp-147, Gln-190, and Gly-217. An RNA binding region spans residues 248–254 (GVGTPDD). The active-site Nucleophile is the Asp-267. An RNA binding; important for wobble base 34 recognition region spans residues 272–276 (TRAGR).

The protein belongs to the queuine tRNA-ribosyltransferase family. In terms of assembly, homodimer. Within each dimer, one monomer is responsible for RNA recognition and catalysis, while the other monomer binds to the replacement base PreQ1.

It carries out the reaction 7-aminomethyl-7-carbaguanine + guanosine(34) in tRNA = 7-aminomethyl-7-carbaguanosine(34) in tRNA + guanine. The protein operates within tRNA modification; tRNA-queuosine biosynthesis. Catalyzes the base-exchange of a guanine (G) residue with the queuine precursor 7-aminomethyl-7-deazaguanine (PreQ1) at position 34 (anticodon wobble position) in tRNAs with GU(N) anticodons (tRNA-Asp, -Asn, -His and -Tyr). Catalysis occurs through a double-displacement mechanism. The nucleophile active site attacks the C1' of nucleotide 34 to detach the guanine base from the RNA, forming a covalent enzyme-RNA intermediate. The proton acceptor active site deprotonates the incoming PreQ1, allowing a nucleophilic attack on the C1' of the ribose to form the product. After dissociation, two additional enzymatic reactions on the tRNA convert PreQ1 to queuine (Q), resulting in the hypermodified nucleoside queuosine (7-(((4,5-cis-dihydroxy-2-cyclopenten-1-yl)amino)methyl)-7-deazaguanosine). The protein is Queuine tRNA-ribosyltransferase of Mesorhizobium japonicum (strain LMG 29417 / CECT 9101 / MAFF 303099) (Mesorhizobium loti (strain MAFF 303099)).